The sequence spans 231 residues: Ninja-family protein AFP3 (231 aa).

The segment covering 83–96 (AKRKRSEKQRKHKA) has biased composition (basic residues). Residues 83–152 (AKRKRSEKQR…SAQSQPENLG (70 aa)) form a disordered region. Positions 130-152 (QATTNKSVETSPSSAQSQPENLG) are enriched in polar residues.

This sequence belongs to the Ninja family. As to quaternary structure, forms a heterodimer with AFP2. Interacts with ABI5/DPBF1, DPBF2, AREB3/DPBF3, EEL/DPBF4, ABF1, ABF3/DPBF5 and ABF4/AREB2.

It is found in the nucleus. Functionally, acts as a negative regulator of abscisic acid (ABA) response and stress responses. This is Ninja-family protein AFP3 (AFP3) from Arabidopsis thaliana (Mouse-ear cress).